The primary structure comprises 93 residues: Large ribosomal subunit protein uL23 (93 aa).

It belongs to the universal ribosomal protein uL23 family. In terms of assembly, part of the 50S ribosomal subunit. Contacts protein L29, and trigger factor when it is bound to the ribosome.

One of the early assembly proteins it binds 23S rRNA. One of the proteins that surrounds the polypeptide exit tunnel on the outside of the ribosome. Forms the main docking site for trigger factor binding to the ribosome. The protein is Large ribosomal subunit protein uL23 of Nitratiruptor sp. (strain SB155-2).